A 490-amino-acid chain; its full sequence is Betaine aldehyde dehydrogenase (490 aa).

Asp-93 contacts K(+). 150–152 (GAW) is a binding site for NAD(+). Lys-162 serves as the catalytic Charge relay system. NAD(+) is bound at residue 176 to 179 (KPSE). Val-180 lines the K(+) pocket. NAD(+) is bound at residue 230–233 (GIAS). Leu-246 is a K(+) binding site. Catalysis depends on Glu-252, which acts as the Proton acceptor. Residues Gly-254, Cys-286, and Glu-387 each coordinate NAD(+). Cys-286 acts as the Nucleophile in catalysis. Cysteine sulfenic acid (-SOH) is present on Cys-286. Lys-457 and Gly-460 together coordinate K(+). Residue Glu-464 is the Charge relay system of the active site.

Belongs to the aldehyde dehydrogenase family. As to quaternary structure, dimer of dimers. It depends on K(+) as a cofactor.

The enzyme catalyses betaine aldehyde + NAD(+) + H2O = glycine betaine + NADH + 2 H(+). Its pathway is amine and polyamine biosynthesis; betaine biosynthesis via choline pathway; betaine from betaine aldehyde: step 1/1. In terms of biological role, involved in the biosynthesis of the osmoprotectant glycine betaine. Catalyzes the irreversible oxidation of betaine aldehyde to the corresponding acid. The polypeptide is Betaine aldehyde dehydrogenase (Pectobacterium atrosepticum (strain SCRI 1043 / ATCC BAA-672) (Erwinia carotovora subsp. atroseptica)).